A 407-amino-acid chain; its full sequence is Large ribosomal subunit protein uL3-like (407 aa).

Positions 1 to 31 are enriched in basic residues; it reads MSHRKFSAPRHGHLGFLPHKRSRRHRGKVKS. A disordered region spans residues 1-37; that stretch reads MSHRKFSAPRHGHLGFLPHKRSRRHRGKVKSWPRDDP.

It belongs to the universal ribosomal protein uL3 family. In terms of assembly, component of the large ribosomal subunit (LSU). Part of a LSU subcomplex, the 5S RNP which is composed of the 5S RNA, RPL5 and RPL11. Interacts with NVL in an ATP-dependent manner. Interacts with RRP1B. Interacts with IPO5, IPO7 and KPNB1; these interactions may be involved in RPL5 nuclear import for the assembly of ribosomal subunits. Interacts with RRP1B. Expression is restricted to striated muscles.

Heart- and skeletal muscle-specific component of the ribosome, which regulates muscle function. Component of the large ribosomal subunit in striated muscle cells: replaces the RPL3 paralog in the ribosome in these cells. The ribosome is a large ribonucleoprotein complex responsible for the synthesis of proteins in the cell. Inhibits myotube growth and muscle function. This is Large ribosomal subunit protein uL3-like from Mus musculus (Mouse).